Consider the following 933-residue polypeptide: 2-oxoglutarate dehydrogenase E1 component (933 aa).

This sequence belongs to the alpha-ketoglutarate dehydrogenase family. As to quaternary structure, homodimer. Part of the 2-oxoglutarate dehydrogenase (OGDH) complex composed of E1 (2-oxoglutarate dehydrogenase), E2 (dihydrolipoamide succinyltransferase) and E3 (dihydrolipoamide dehydrogenase); the complex contains multiple copies of the three enzymatic components (E1, E2 and E3). Thiamine diphosphate is required as a cofactor.

It catalyses the reaction N(6)-[(R)-lipoyl]-L-lysyl-[protein] + 2-oxoglutarate + H(+) = N(6)-[(R)-S(8)-succinyldihydrolipoyl]-L-lysyl-[protein] + CO2. Its function is as follows. E1 component of the 2-oxoglutarate dehydrogenase (OGDH) complex which catalyzes the decarboxylation of 2-oxoglutarate, the first step in the conversion of 2-oxoglutarate to succinyl-CoA and CO(2). The sequence is that of 2-oxoglutarate dehydrogenase E1 component from Staphylococcus saprophyticus subsp. saprophyticus (strain ATCC 15305 / DSM 20229 / NCIMB 8711 / NCTC 7292 / S-41).